Consider the following 224-residue polypeptide: Imidazoleglycerol-phosphate dehydratase (224 aa).

The protein belongs to the imidazoleglycerol-phosphate dehydratase family.

It carries out the reaction D-erythro-1-(imidazol-4-yl)glycerol 3-phosphate = 3-(imidazol-4-yl)-2-oxopropyl phosphate + H2O. It functions in the pathway amino-acid biosynthesis; L-histidine biosynthesis; L-histidine from 5-phospho-alpha-D-ribose 1-diphosphate: step 6/9. The sequence is that of Imidazoleglycerol-phosphate dehydratase (HIS3) from Komagataella pastoris (Yeast).